We begin with the raw amino-acid sequence, 351 residues long: Phenylalanine--tRNA ligase alpha subunit (351 aa).

Glutamate 276 contacts Mg(2+).

The protein belongs to the class-II aminoacyl-tRNA synthetase family. Phe-tRNA synthetase alpha subunit type 1 subfamily. In terms of assembly, tetramer of two alpha and two beta subunits. Mg(2+) is required as a cofactor.

The protein localises to the cytoplasm. The enzyme catalyses tRNA(Phe) + L-phenylalanine + ATP = L-phenylalanyl-tRNA(Phe) + AMP + diphosphate + H(+). The protein is Phenylalanine--tRNA ligase alpha subunit of Psychrobacter arcticus (strain DSM 17307 / VKM B-2377 / 273-4).